We begin with the raw amino-acid sequence, 1555 residues long: MSAPLGPRGRPAPTPAASQPPPQPEMPDLSHLTEEERKIIQAVMDRQKKEEEKEQSVLKKLHQQFEMYKEQVKKMGEESQQQQEQKGDAPTCGICHKTKFADGCGHNCSYCQTKFCARCGGRVSLRSNKVMWVCNLCRKQQEILTKSGAWFYNSGSNTPQQPDQKALRGLRSEEAPQEKKAKLHEQTQFQGPPGDSSVPAVERGRAHGLTRQDSIKNGSGMKHQIASDMPSDRKRSPSVSRDQNRRYDQSEEREEYSQYVPSDSTMPRSPSDYADRRSQREPQFYEEPDHLNYRDSNRRGHRHSKEYIVDDEDVESRDEYERQRREEEYQARYRSDPNLARYPVKPQPYEEQMRIHAEVSRARHERRHSDVSLANAELEDSRISLLRMDRPSRQRSVSERRAAMENQRSYSMERTREAQGQSSYPQRTTNHSPPTPRRSPIPLDRPELRRADSLRKQHHLDPSSAVRKTKREKMETMLRNDSLSSDQSESVRPPPPRPHKSKKGGKMRQVSLSSSEEELASTPEYTSCDDVEIESESVGEKGDMEYSWLEHASWHSSEASPMSLHPVTWQPSKDGDRLIGRILLNKRLKDGSVPRDSGAMLGLKVVGGKMTESGRLCAFITKVKKGSLADTVGHLRPGDEVLEWNGRLLQGATFEEVYNIILESKPEPQVELVVSRPIGDMPRIPDSTHAQLESSSSSFESQKMDRPSISVTSPMSPGMLRDVPQFLSGQLSSQSLSRRTTPFVPRVQIKLWFDKVGHQLIVTILGAKDLPSREDGRPRNPYVKIYFLPDRSDKNKRRTKTVKKTLEPKWNQTFIYSPVHRREFRERMLEITLWDQARVREEESEFLGEILIELETALLDDEPHWYKLQTHDVSSLPLPHPSPYMPRRQLHGESPTRRLQRSKRISDSEVSDYDCEDGVGVVSDYRHDGRDLQSSTLSVPEQVMSSNHCSPSGSPHRVDVIGRTRSWSPSVPPPQRNVEQGLRGTRATGHYNTISRMDRHRVMDDHYSSERDSHFLTLPRSRHRQTSEHHHRDGRDCEAADRQPYHRSRSTEQRPLLERTTTRSRSSERADTNLMRSMPSLMTGRSAPPSPALSRSHPRTGSVQTSPSSTPVTGRRGRQLPQLPPKGTLERMITEDMDSTRKRNSGAMDIEERNRQMKLNKYKQVAGSDPRLEQDYHSKYRSGWDPHRGADTVSTKSSDSDVSDVSAVSRTSSASRFSSTSYMSVQSERPRGNRKISVFTSKMQSRQMGVSGKSMAKSTSISGDMCSLEKNDGSQSDTAVGALGTSGKKRRSSIGAKMVAIVGLSRKSRSASQLSQTEGGGKKLRSTVQRSTETGLAVEMRNWMTRQASRESTDGSMNSYSSEGNLIFPGVRLASDSQFSDFLDGLGPAQLVGRQTLATPAMGDIQVGMMDKKGQLEVEIIRARGLVVKPGSKTLPAPYVKVYLLDNGVCIAKKKTKVARKTLEPLYQQLLSFEESPQGKVLQIIVWGDYGRMDHKSFMGVAQILLDELELSNMVIGWFKLFPPSSLVDPTLAPLTRRASQSSLESSTGPSYSRS.

The disordered stretch occupies residues 1–35 (MSAPLGPRGRPAPTPAASQPPPQPEMPDLSHLTEE). The span at 10 to 25 (RPAPTPAASQPPPQPE) shows a compositional bias: pro residues. The RabBD domain occupies 26–154 (MPDLSHLTEE…TKSGAWFYNS (129 aa)). The FYVE-type zinc finger occupies 86–142 (KGDAPTCGICHKTKFADGCGHNCSYCQTKFCARCGGRVSLRSNKVMWVCNLCRKQQE). The Zn(2+) site is built by cysteine 92, cysteine 95, cysteine 108, cysteine 111, cysteine 116, cysteine 119, cysteine 134, and cysteine 137. Over residues 154 to 163 (SGSNTPQQPD) the composition is skewed to polar residues. The interval 154 to 530 (SGSNTPQQPD…STPEYTSCDD (377 aa)) is disordered. A compositionally biased stretch (basic and acidic residues) spans 170-185 (LRSEEAPQEKKAKLHE). Residues 259–268 (YVPSDSTMPR) show a composition bias toward polar residues. Basic and acidic residues-rich tracts occupy residues 287-298 (EPDHLNYRDSNR), 317-335 (RDEY…RYRS), 351-370 (EQMR…RHSD), and 379-403 (EDSR…RRAA). Position 369 is a phosphoserine (serine 369). Residues 418–432 (AQGQSSYPQRTTNHS) show a composition bias toward polar residues. Basic and acidic residues predominate over residues 444–461 (DRPELRRADSLRKQHHLD). Over residues 479–490 (RNDSLSSDQSES) the composition is skewed to polar residues. Over residues 497–506 (RPHKSKKGGK) the composition is skewed to basic residues. The 87-residue stretch at 590 to 676 (DGSVPRDSGA…EPQVELVVSR (87 aa)) folds into the PDZ domain. A Phosphothreonine modification is found at threonine 611. A disordered region spans residues 682 to 716 (PRIPDSTHAQLESSSSSFESQKMDRPSISVTSPMS). 2 positions are modified to phosphoserine: serine 713 and serine 716. One can recognise a C2 1 domain in the interval 743-866 (FVPRVQIKLW…ALLDDEPHWY (124 aa)). Disordered stretches follow at residues 877–913 (PLPH…VSDY), 935–1145 (STLS…KRNS), 1180–1207 (YRSG…DVSA), 1268–1288 (LEKN…TSGK), and 1307–1332 (KSRS…QRST). Residues 935 to 953 (STLSVPEQVMSSNHCSPSG) show a composition bias toward polar residues. Composition is skewed to basic and acidic residues over residues 996-1014 (RMDR…RDSH) and 1025-1071 (QTSE…ERAD). Low complexity predominate over residues 1092 to 1114 (ALSRSHPRTGSVQTSPSSTPVTG). Phosphoserine is present on serine 1106. 2 stretches are compositionally biased toward basic and acidic residues: residues 1128–1141 (TLER…DSTR) and 1180–1190 (YRSGWDPHRGA). Serine 1200 and serine 1276 each carry phosphoserine. In terms of domain architecture, C2 2 spans 1401 to 1519 (AMGDIQVGMM…ELSNMVIGWF (119 aa)). Phosphoserine is present on residues serine 1540 and serine 1543.

As to quaternary structure, heterodimer with PCLO. Part of a ternary complex involving PCLO and EPAC2. Interacts with RAB3C, RAB3D and RAB26. Binds RAB3A and RAB3B that have been activated by GTP-binding. Interacts with TSPOAP1 and RIMBP2. Interacts with PPFIA3 and PPFIA4. Interacts via its zinc finger with the first C2 domain of UNC13A. Forms a complex consisting of UNC13A, RIMS2 and RAB3A. In terms of tissue distribution, highly expressed in hippocampus, brain cortex, cerebellum and olfactory bulb. Detected at intermediate levels in midbrain, hindbrain and spinal cord, and at low levels in testis.

It localises to the cell membrane. The protein localises to the synapse. It is found in the presynaptic cell membrane. Functionally, rab effector involved in exocytosis. May act as scaffold protein. Plays a role in dendrite formation by melanocytes. The polypeptide is Regulating synaptic membrane exocytosis protein 2 (Rims2) (Rattus norvegicus (Rat)).